Reading from the N-terminus, the 326-residue chain is Delta-aminolevulinic acid dehydratase (326 aa).

The Zn(2+) site is built by Cys-119, Cys-121, and Cys-129. Lys-198 functions as the Schiff-base intermediate with substrate in the catalytic mechanism. Arg-208 and Arg-220 together coordinate 5-aminolevulinate. Glu-236 is a binding site for Mg(2+). Lys-251 serves as the catalytic Schiff-base intermediate with substrate. Residues Ser-277 and Tyr-316 each coordinate 5-aminolevulinate.

The protein belongs to the ALAD family. As to quaternary structure, homooctamer. Zn(2+) is required as a cofactor.

It carries out the reaction 2 5-aminolevulinate = porphobilinogen + 2 H2O + H(+). It functions in the pathway porphyrin-containing compound metabolism; protoporphyrin-IX biosynthesis; coproporphyrinogen-III from 5-aminolevulinate: step 1/4. Functionally, catalyzes an early step in the biosynthesis of tetrapyrroles. Binds two molecules of 5-aminolevulinate per subunit, each at a distinct site, and catalyzes their condensation to form porphobilinogen. This chain is Delta-aminolevulinic acid dehydratase (hemB), found in Synechococcus elongatus (strain ATCC 33912 / PCC 7942 / FACHB-805) (Anacystis nidulans R2).